A 53-amino-acid chain; its full sequence is Cytochrome c oxidase subunit 7e (53 aa).

In terms of assembly, slime mold cytochrome c oxidase consists of at least seven different polypeptides species, subunits I, II, III, IV, V, VI, and VIIe/s in order of MW.

Its subcellular location is the mitochondrion inner membrane. It catalyses the reaction 4 Fe(II)-[cytochrome c] + O2 + 8 H(+)(in) = 4 Fe(III)-[cytochrome c] + 2 H2O + 4 H(+)(out). Its function is as follows. This protein is one of the nuclear-coded polypeptide chains of cytochrome c oxidase, the terminal oxidase in mitochondrial electron transport. This is Cytochrome c oxidase subunit 7e (cxgE) from Dictyostelium discoideum (Social amoeba).